Here is a 131-residue protein sequence, read N- to C-terminus: MIKKYEACFLFKSEELEYKVALEDVKKQLTAFNASDFVENSLGERALEYSIRKQSRGRYEIIEFKMDSSNLKELEVQLRLIKNLLRYMILVKINKKVNVKKVKRRNFREFKDNRDTREKELPESTADVKVD.

This sequence belongs to the bacterial ribosomal protein bS6 family.

Its function is as follows. Binds together with bS18 to 16S ribosomal RNA. The polypeptide is Small ribosomal subunit protein bS6 (Borrelia hermsii (strain HS1 / DAH)).